The chain runs to 353 residues: UPF0421 protein YgaE (353 aa).

4 helical membrane passes run leucine 20–isoleucine 40, valine 67–isoleucine 87, leucine 103–isoleucine 123, and threonine 125–proline 145.

This sequence belongs to the UPF0421 family.

The protein resides in the cell membrane. The chain is UPF0421 protein YgaE (ygaE) from Bacillus subtilis (strain 168).